A 283-amino-acid chain; its full sequence is Pantothenate synthetase (283 aa).

An ATP-binding site is contributed by 30–37; it reads MGNLHAGH. His37 acts as the Proton donor in catalysis. Gln61 provides a ligand contact to (R)-pantoate. Gln61 contacts beta-alanine. 149–152 is an ATP binding site; the sequence is GEKD. Gln155 is a (R)-pantoate binding site. ATP contacts are provided by residues Val178 and 186–189; that span reads LSSR.

Belongs to the pantothenate synthetase family. Homodimer.

It is found in the cytoplasm. The catalysed reaction is (R)-pantoate + beta-alanine + ATP = (R)-pantothenate + AMP + diphosphate + H(+). It participates in cofactor biosynthesis; (R)-pantothenate biosynthesis; (R)-pantothenate from (R)-pantoate and beta-alanine: step 1/1. Its function is as follows. Catalyzes the condensation of pantoate with beta-alanine in an ATP-dependent reaction via a pantoyl-adenylate intermediate. The sequence is that of Pantothenate synthetase from Azotobacter vinelandii (strain DJ / ATCC BAA-1303).